Here is a 483-residue protein sequence, read N- to C-terminus: Kynureninase 1 (483 aa).

Pyridoxal 5'-phosphate contacts are provided by residues leucine 147, threonine 148, 175–178 (FPSD), serine 232, aspartate 261, histidine 264, and tyrosine 286. Lysine 287 is subject to N6-(pyridoxal phosphate)lysine. Residues tryptophan 326 and asparagine 354 each contribute to the pyridoxal 5'-phosphate site.

The protein belongs to the kynureninase family. As to quaternary structure, homodimer. It depends on pyridoxal 5'-phosphate as a cofactor.

The protein resides in the cytoplasm. It catalyses the reaction L-kynurenine + H2O = anthranilate + L-alanine + H(+). The enzyme catalyses 3-hydroxy-L-kynurenine + H2O = 3-hydroxyanthranilate + L-alanine + H(+). Its pathway is amino-acid degradation; L-kynurenine degradation; L-alanine and anthranilate from L-kynurenine: step 1/1. It participates in cofactor biosynthesis; NAD(+) biosynthesis; quinolinate from L-kynurenine: step 2/3. Its function is as follows. Catalyzes the cleavage of L-kynurenine (L-Kyn) and L-3-hydroxykynurenine (L-3OHKyn) into anthranilic acid (AA) and 3-hydroxyanthranilic acid (3-OHAA), respectively. This is Kynureninase 1 (bna5-1) from Aspergillus terreus (strain NIH 2624 / FGSC A1156).